A 429-amino-acid polypeptide reads, in one-letter code: UDP-N-acetylglucosamine 1-carboxyvinyltransferase (429 aa).

Residue 22-23 (KN) participates in phosphoenolpyruvate binding. Arg102 is a binding site for UDP-N-acetyl-alpha-D-glucosamine. Cys126 acts as the Proton donor in catalysis. Cys126 carries the 2-(S-cysteinyl)pyruvic acid O-phosphothioketal modification. Residues 131-135 (RPVDL), Asp316, and Ile338 each bind UDP-N-acetyl-alpha-D-glucosamine.

This sequence belongs to the EPSP synthase family. MurA subfamily.

Its subcellular location is the cytoplasm. The enzyme catalyses phosphoenolpyruvate + UDP-N-acetyl-alpha-D-glucosamine = UDP-N-acetyl-3-O-(1-carboxyvinyl)-alpha-D-glucosamine + phosphate. Its pathway is cell wall biogenesis; peptidoglycan biosynthesis. Functionally, cell wall formation. Adds enolpyruvyl to UDP-N-acetylglucosamine. In Rhodopseudomonas palustris (strain TIE-1), this protein is UDP-N-acetylglucosamine 1-carboxyvinyltransferase.